Here is a 171-residue protein sequence, read N- to C-terminus: 6,7-dimethyl-8-ribityllumazine synthase (171 aa).

5-amino-6-(D-ribitylamino)uracil-binding positions include phenylalanine 24, 58-60, and 82-84; these read ALE and AVI. Position 87 to 88 (87 to 88) interacts with (2S)-2-hydroxy-3-oxobutyl phosphate; the sequence is ET. Histidine 90 functions as the Proton donor in the catalytic mechanism. Asparagine 115 is a binding site for 5-amino-6-(D-ribitylamino)uracil. Residue arginine 129 coordinates (2S)-2-hydroxy-3-oxobutyl phosphate. The disordered stretch occupies residues 150–171; sequence ALDQLGDDEDEEEDEEDEEERA. Residues 154 to 171 show a composition bias toward acidic residues; sequence LGDDEDEEEDEEDEEERA.

The protein belongs to the DMRL synthase family.

The enzyme catalyses (2S)-2-hydroxy-3-oxobutyl phosphate + 5-amino-6-(D-ribitylamino)uracil = 6,7-dimethyl-8-(1-D-ribityl)lumazine + phosphate + 2 H2O + H(+). It functions in the pathway cofactor biosynthesis; riboflavin biosynthesis; riboflavin from 2-hydroxy-3-oxobutyl phosphate and 5-amino-6-(D-ribitylamino)uracil: step 1/2. Catalyzes the formation of 6,7-dimethyl-8-ribityllumazine by condensation of 5-amino-6-(D-ribitylamino)uracil with 3,4-dihydroxy-2-butanone 4-phosphate. This is the penultimate step in the biosynthesis of riboflavin. This Burkholderia ambifaria (strain MC40-6) protein is 6,7-dimethyl-8-ribityllumazine synthase.